Consider the following 457-residue polypeptide: MLRAEWVEKRKRFKNKTQMHLARQGIITEEMEYVAKREGLHPEFVRQEVARGRMIIPANINHLHLEPMCIGINSKVKVNANIGNSGLASDIPTEVEKAKVAIKYGADTIMDLSTGEAIKETREAIINVSTVPVGTVPIYEAWKIAKGNVKELTVDLILDVIEEQARQGVSYMTIHAGILREHLPLVQHRVMGIVSRGGAILAQWMAEHGKQNPLYEHFDKICEIFKKYDVSFSLGDALRPGCIEDATDDAQLAELKVLGELVEKAWKHDVQAMVEGPGHVPLHQVEFNMKIQQEWCHEAPFYVLGPLVLDVAPGYDHIGSAIGGALAGWAGAAMLCYITPKEHLGLPNVEDVKQGVIAYKIAAHAADIAKHWPGARDWDLAMSIARYNFDWNKQFELAMDPETARAYHDETLPQEGYKTAKFCSMCGPEFCSYKISQKVQEKVSPEELIENGNWVAP.

Residues N81, M110, Y139, H175, 195–197, 236–239, and E275 each bind substrate; these read SRG and DALR. H279 provides a ligand contact to Zn(2+). Residue Y302 participates in substrate binding. H343 serves as a coordination point for Zn(2+). The [4Fe-4S] cluster site is built by C423, C426, and C431.

It belongs to the ThiC family. [4Fe-4S] cluster is required as a cofactor.

The catalysed reaction is 5-amino-1-(5-phospho-beta-D-ribosyl)imidazole + S-adenosyl-L-methionine = 4-amino-2-methyl-5-(phosphooxymethyl)pyrimidine + CO + 5'-deoxyadenosine + formate + L-methionine + 3 H(+). It functions in the pathway cofactor biosynthesis; thiamine diphosphate biosynthesis. In terms of biological role, catalyzes the synthesis of the hydroxymethylpyrimidine phosphate (HMP-P) moiety of thiamine from aminoimidazole ribotide (AIR) in a radical S-adenosyl-L-methionine (SAM)-dependent reaction. The chain is Phosphomethylpyrimidine synthase from Aquifex aeolicus (strain VF5).